Reading from the N-terminus, the 232-residue chain is RNA chaperone ProQ (232 aa).

The segment at 105–182 is disordered; it reads EAKARVQAQR…REEQHTPVSD (78 aa). The segment covering 117-136 has biased composition (basic and acidic residues); sequence QQAKKREAAAAAGEKEDAPR. A compositionally biased stretch (basic residues) spans 137 to 146; sequence RERKPRPTTP. Residues 147-177 show a composition bias toward basic and acidic residues; that stretch reads RRKEGAERKPRAQKSVEKAPKTVKAPREEQH.

The protein belongs to the ProQ family.

It is found in the cytoplasm. Its function is as follows. RNA chaperone with significant RNA binding, RNA strand exchange and RNA duplexing activities. May regulate ProP activity through an RNA-based, post-transcriptional mechanism. This Escherichia coli O7:K1 (strain IAI39 / ExPEC) protein is RNA chaperone ProQ.